A 313-amino-acid polypeptide reads, in one-letter code: MSTKTIRIATRQSPLAMWQALYVQQKLQQCHPDLEVQLVPMVTQGDVILDTPLAKIGGKGLFVKELELALLEGRADIAVHSMKDVPISFPEGLGLVTICERDDPRDAFVSVKYHSLDELPTGSIVGTSSLRRQCQLRELRPDLIVRDLRGNVGTRLNKLDNGHYDAIILAVAGLKRLKLHERIRTPLTAEQSLPAVGQGAVGIECRLDDQQTQTLLAPLNHYDTEVCVLAERAMNTRLEGGCQVPIGSYAIWQDGKIWLRALVGAPDGSVIIRGERTALPKDACQAGVELAEELLERGAREILTQVYRGNPST.

S-(dipyrrolylmethanemethyl)cysteine is present on C242.

The protein belongs to the HMBS family. Monomer. Dipyrromethane is required as a cofactor.

The enzyme catalyses 4 porphobilinogen + H2O = hydroxymethylbilane + 4 NH4(+). It functions in the pathway porphyrin-containing compound metabolism; protoporphyrin-IX biosynthesis; coproporphyrinogen-III from 5-aminolevulinate: step 2/4. Tetrapolymerization of the monopyrrole PBG into the hydroxymethylbilane pre-uroporphyrinogen in several discrete steps. The sequence is that of Porphobilinogen deaminase from Photorhabdus laumondii subsp. laumondii (strain DSM 15139 / CIP 105565 / TT01) (Photorhabdus luminescens subsp. laumondii).